A 95-amino-acid chain; its full sequence is Small ribosomal subunit protein uS19 (95 aa).

Belongs to the universal ribosomal protein uS19 family.

In terms of biological role, protein S19 forms a complex with S13 that binds strongly to the 16S ribosomal RNA. The protein is Small ribosomal subunit protein uS19 of Thermotoga sp. (strain RQ2).